The chain runs to 384 residues: Brix domain-containing protein F44G4.1 (384 aa).

Disordered stretches follow at residues 1–58 (MAPK…KVVK) and 82–135 (SKAT…PQKE). Acidic residues predominate over residues 18–48 (FVEEEVTGDVDEDGFEQAEDMPDEVDSDEDE). Basic residues predominate over residues 96-114 (LPKSQRGKALKRALRKDKR). The segment covering 115-127 (ARQGERAQIRDEL) has biased composition (basic and acidic residues). In terms of domain architecture, Brix spans 177–360 (PKVMITMTPK…LKWLQKGTFD (184 aa)).

In Caenorhabditis elegans, this protein is Brix domain-containing protein F44G4.1.